The primary structure comprises 116 residues: Protein Rev (116 aa).

Serine 5 and serine 8 each carry phosphoserine; by host CK2. The tract at residues 18 to 26 (LIKFLYQSN) is homomultimerization. The disordered stretch occupies residues 23–49 (YQSNPPPNPEGTRQARRNRRRRWRERQ). The Nuclear localization signal and RNA-binding (RRE) signature appears at 34–50 (TRQARRNRRRRWRERQR). Positions 36-47 (QARRNRRRRWRE) are enriched in basic residues. The Nuclear export signal and binding to XPO1 signature appears at 73 to 84 (LQLPPLERLTLD). Phosphoserine; by host occurs at positions 92 and 99.

Belongs to the HIV-1 REV protein family. In terms of assembly, homomultimer; when bound to the RRE. Multimeric assembly is essential for activity and may involve XPO1. Binds to human KPNB1, XPO1, TNPO1, RANBP5 and IPO7. Interacts with the viral Integrase. Interacts with human KHDRBS1. Interacts with human NAP1; this interaction decreases Rev multimerization and stimulates its activity. Interacts with human DEAD-box helicases DDX3 and DDX24; these interactions may serve for viral RNA export to the cytoplasm and packaging, respectively. Interacts with human PSIP1; this interaction may inhibit HIV-1 DNA integration by promoting dissociation of the Integrase-LEDGF/p75 complex. In terms of processing, asymmetrically arginine dimethylated at one site by host PRMT6. Methylation impairs the RNA-binding activity and export of viral RNA from the nucleus to the cytoplasm. Phosphorylated by protein kinase CK2. Presence of, and maybe binding to the N-terminus of the regulatory beta subunit of CK2 is necessary for CK2-mediated Rev's phosphorylation.

It localises to the host nucleus. It is found in the host nucleolus. Its subcellular location is the host cytoplasm. Functionally, escorts unspliced or incompletely spliced viral pre-mRNAs (late transcripts) out of the nucleus of infected cells. These pre-mRNAs carry a recognition sequence called Rev responsive element (RRE) located in the env gene, that is not present in fully spliced viral mRNAs (early transcripts). This function is essential since most viral proteins are translated from unspliced or partially spliced pre-mRNAs which cannot exit the nucleus by the pathway used by fully processed cellular mRNAs. Rev itself is translated from a fully spliced mRNA that readily exits the nucleus. Rev's nuclear localization signal (NLS) binds directly to KPNB1/Importin beta-1 without previous binding to KPNA1/Importin alpha-1. KPNB1 binds to the GDP bound form of RAN (Ran-GDP) and targets Rev to the nucleus. In the nucleus, the conversion from Ran-GDP to Ran-GTP dissociates Rev from KPNB1 and allows Rev's binding to the RRE in viral pre-mRNAs. Rev multimerization on the RRE via cooperative assembly exposes its nuclear export signal (NES) to the surface. Rev can then form a complex with XPO1/CRM1 and Ran-GTP, leading to nuclear export of the complex. Conversion from Ran-GTP to Ran-GDP mediates dissociation of the Rev/RRE/XPO1/RAN complex, so that Rev can return to the nucleus for a subsequent round of export. Beside KPNB1, also seems to interact with TNPO1/Transportin-1, RANBP5/IPO5 and IPO7/RANBP7 for nuclear import. The nucleoporin-like HRB/RIP is an essential cofactor that probably indirectly interacts with Rev to release HIV RNAs from the perinuclear region to the cytoplasm. The chain is Protein Rev from Human immunodeficiency virus type 1 group M subtype B (isolate HXB3) (HIV-1).